Consider the following 150-residue polypeptide: Transcriptional repressor NrdR (150 aa).

A zinc finger lies at 3–34; that stretch reads CPFCAFADSKVVDSRPDKGGSTIRRRRECESC. The region spanning 49-139 is the ATP-cone domain; the sequence is PLVIKKDGRR…VYRSFKDITE (91 aa).

It belongs to the NrdR family. Zn(2+) serves as cofactor.

Negatively regulates transcription of bacterial ribonucleotide reductase nrd genes and operons by binding to NrdR-boxes. This is Transcriptional repressor NrdR from Geotalea uraniireducens (strain Rf4) (Geobacter uraniireducens).